The following is a 71-amino-acid chain: Small ribosomal subunit protein bS21 (71 aa).

This sequence belongs to the bacterial ribosomal protein bS21 family.

This chain is Small ribosomal subunit protein bS21, found in Shewanella sediminis (strain HAW-EB3).